A 129-amino-acid polypeptide reads, in one-letter code: uncharacterized protein (129 aa).

Belongs to the asfivirus C129R family.

The protein resides in the virion. Its function is as follows. Plays a role in the inhibition of type I interferon signaling pathway. Mechanistically, specifically interacts with 2',3'-cGAMP and cleaves it via its phosphodiesterase activity. In turn, prevents 2',3'-cGAMP interaction with host ER-resident STING1 leading to inhibition of downstream signaling pathway and type I interferon production. This is an uncharacterized protein from African swine fever virus (strain Badajoz 1971 Vero-adapted) (Ba71V).